Consider the following 63-residue polypeptide: Muscarinic toxin 2 (63 aa).

4 disulfides stabilise this stretch: Cys-3-Cys-22, Cys-17-Cys-42, Cys-44-Cys-55, and Cys-56-Cys-61.

Belongs to the three-finger toxin family. Short-chain subfamily. Type B muscarinic toxin sub-subfamily. As to quaternary structure, monomer. Expressed by the venom gland.

It localises to the secreted. In terms of biological role, blocks M2 muscarinic acetylcholine receptors (CHRM2). Fully blocks the binding of N-methylscopolamine (NMS) and oxotremorine-M to M2 receptors, slightly increased NMS binding to M1 receptors. In Dendroaspis angusticeps (Eastern green mamba), this protein is Muscarinic toxin 2.